Here is a 231-residue protein sequence, read N- to C-terminus: Phosphatidylserine decarboxylase proenzyme (231 aa).

The active-site Schiff-base intermediate with substrate; via pyruvic acid is S188. The residue at position 188 (S188) is a Pyruvic acid (Ser); by autocatalysis.

This sequence belongs to the phosphatidylserine decarboxylase family. PSD-A subfamily. Heterodimer of a large membrane-associated beta subunit and a small pyruvoyl-containing alpha subunit. The cofactor is pyruvate. Is synthesized initially as an inactive proenzyme. Formation of the active enzyme involves a self-maturation process in which the active site pyruvoyl group is generated from an internal serine residue via an autocatalytic post-translational modification. Two non-identical subunits are generated from the proenzyme in this reaction, and the pyruvate is formed at the N-terminus of the alpha chain, which is derived from the carboxyl end of the proenzyme. The post-translation cleavage follows an unusual pathway, termed non-hydrolytic serinolysis, in which the side chain hydroxyl group of the serine supplies its oxygen atom to form the C-terminus of the beta chain, while the remainder of the serine residue undergoes an oxidative deamination to produce ammonia and the pyruvoyl prosthetic group on the alpha chain.

It is found in the cell membrane. It catalyses the reaction a 1,2-diacyl-sn-glycero-3-phospho-L-serine + H(+) = a 1,2-diacyl-sn-glycero-3-phosphoethanolamine + CO2. Its pathway is phospholipid metabolism; phosphatidylethanolamine biosynthesis; phosphatidylethanolamine from CDP-diacylglycerol: step 2/2. In terms of biological role, catalyzes the formation of phosphatidylethanolamine (PtdEtn) from phosphatidylserine (PtdSer). The protein is Phosphatidylserine decarboxylase proenzyme of Rickettsia bellii (strain OSU 85-389).